The primary structure comprises 178 residues: Large ribosomal subunit protein uL6 (178 aa).

The protein belongs to the universal ribosomal protein uL6 family. Part of the 50S ribosomal subunit.

Functionally, this protein binds to the 23S rRNA, and is important in its secondary structure. It is located near the subunit interface in the base of the L7/L12 stalk, and near the tRNA binding site of the peptidyltransferase center. The chain is Large ribosomal subunit protein uL6 from Coxiella burnetii (strain CbuG_Q212) (Coxiella burnetii (strain Q212)).